Reading from the N-terminus, the 496-residue chain is Apolipoprotein N-acyltransferase (496 aa).

The next 6 helical transmembrane spans lie at 23–43 (GIATSTHFWLLFMPLSLFILW), 50–70 (LANFLWGFFFILVSHSWLYEL), 84–104 (LIISISILFGCSIIGGILVYL), 126–146 (LTIKVLLLSFAWGIGEFILSQ), 171–191 (WIGASGLCVVQLTIGFWIYLI), and 205–225 (FLFGLLILVILHFLGGLTNPI). The 229-residue stretch at 236-464 (WQTNMPTREK…NDVVNPNFSI (229 aa)) folds into the CN hydrolase domain. The active-site Proton acceptor is the E276. K325 is an active-site residue. The active-site Nucleophile is C374. The helical transmembrane segment at 476 to 496 (PLFLLCLFLIGLNLYFGKFTN) threads the bilayer.

It belongs to the CN hydrolase family. Apolipoprotein N-acyltransferase subfamily.

It localises to the cell inner membrane. It catalyses the reaction N-terminal S-1,2-diacyl-sn-glyceryl-L-cysteinyl-[lipoprotein] + a glycerophospholipid = N-acyl-S-1,2-diacyl-sn-glyceryl-L-cysteinyl-[lipoprotein] + a 2-acyl-sn-glycero-3-phospholipid + H(+). Its pathway is protein modification; lipoprotein biosynthesis (N-acyl transfer). Its function is as follows. Catalyzes the phospholipid dependent N-acylation of the N-terminal cysteine of apolipoprotein, the last step in lipoprotein maturation. The chain is Apolipoprotein N-acyltransferase from Prochlorococcus marinus subsp. pastoris (strain CCMP1986 / NIES-2087 / MED4).